Reading from the N-terminus, the 251-residue chain is Probable phosphatase Sama_2233 (251 aa).

9 residues coordinate Zn(2+): histidine 8, histidine 10, histidine 16, histidine 41, glutamate 74, histidine 102, histidine 132, aspartate 193, and histidine 195.

Belongs to the PHP family. Zn(2+) serves as cofactor.

This Shewanella amazonensis (strain ATCC BAA-1098 / SB2B) protein is Probable phosphatase Sama_2233.